A 257-amino-acid chain; its full sequence is Hydroxyacylglutathione hydrolase (257 aa).

The Zn(2+) site is built by His-54, His-56, Asp-58, His-59, His-113, Asp-137, and His-175.

This sequence belongs to the metallo-beta-lactamase superfamily. Glyoxalase II family. As to quaternary structure, monomer. The cofactor is Zn(2+).

The catalysed reaction is an S-(2-hydroxyacyl)glutathione + H2O = a 2-hydroxy carboxylate + glutathione + H(+). The protein operates within secondary metabolite metabolism; methylglyoxal degradation; (R)-lactate from methylglyoxal: step 2/2. In terms of biological role, thiolesterase that catalyzes the hydrolysis of S-D-lactoyl-glutathione to form glutathione and D-lactic acid. This Crocosphaera subtropica (strain ATCC 51142 / BH68) (Cyanothece sp. (strain ATCC 51142)) protein is Hydroxyacylglutathione hydrolase.